A 447-amino-acid polypeptide reads, in one-letter code: N-succinylarginine dihydrolase (447 aa).

Residues 19–28 (AGLSFGNEAS), Asn-110, and 137–138 (HR) contribute to the substrate site. Residue Glu-174 is part of the active site. Arg-212 is a binding site for substrate. His-248 is an active-site residue. Residues Asp-250 and Asn-359 each coordinate substrate. Cys-365 acts as the Nucleophile in catalysis.

Belongs to the succinylarginine dihydrolase family. In terms of assembly, homodimer.

It carries out the reaction N(2)-succinyl-L-arginine + 2 H2O + 2 H(+) = N(2)-succinyl-L-ornithine + 2 NH4(+) + CO2. Its pathway is amino-acid degradation; L-arginine degradation via AST pathway; L-glutamate and succinate from L-arginine: step 2/5. In terms of biological role, catalyzes the hydrolysis of N(2)-succinylarginine into N(2)-succinylornithine, ammonia and CO(2). The polypeptide is N-succinylarginine dihydrolase (Salmonella schwarzengrund (strain CVM19633)).